The following is a 530-amino-acid chain: S-adenosylhomocysteine hydrolase-like protein 1 (530 aa).

Met-1 carries the post-translational modification N-acetylmethionine. Ser-2 bears the N-acetylserine mark. Ser-2 carries the post-translational modification Phosphoserine. Lys-40 bears the N6-acetyllysine mark. Positions 53–103 are disordered; that stretch reads KFPTKTGRRSLSRSISQSSTDSYSSAASYTDSSDDEVSPREKQQTNSKGSS. Positions 64–83 are enriched in low complexity; the sequence is SRSISQSSTDSYSSAASYTD. Residues 65-92 are PEST; that stretch reads RSISQSSTDSYSSAASYTDSSDDEVSPR. A phosphoserine mark is found at Ser-68, Ser-71, Ser-74, Ser-77, and Ser-84. The interval 138-201 is interaction with BCL2L10; the sequence is QGEKPLAGAK…EAGVAVFAWK (64 aa). Residues Thr-155, Asp-229, Glu-254, Lys-284, and Asp-288 each contribute to the substrate site. The tract at residues 281 to 448 is NAD binding; sequence SVTKQKFDNL…EGRLLNLSCS (168 aa). NAD(+) is bound by residues 318–322, Glu-341, and Asn-376; that span reads GYGEV. Residue Ser-391 is modified to Phosphoserine. 397–399 provides a ligand contact to NAD(+); it reads MGH. Residues 520 to 530 are PDZ-binding; that stretch reads NGPFKPNYYRY.

Belongs to the adenosylhomocysteinase family. In terms of assembly, forms multimers. Forms heteromultimers with AHCYL2 (via the C-terminal region). Interacts (when phosphorylated) with ITPR1 (when not phosphorylated); the interaction suppresses inositol 1,4,5-trisphosphate binding to ITPR1. Interacts with BCL2L10; this strengthens the interaction of AHCYL1 with ITPR1. Interacts with CFTR and SLC26A6; the interactions take place once AHCYL1 is released from ITPR1 and increase CFTR and SLC26A6 activities. Interacts with RRM1; in a phosphorylation- and (dATP)-dependent manner. Interacts (via PEST domain when phosphorylated) with SLC4A4 isoform 1 but not isoform 2; the interaction increases SLC4A4 isoform 1 activity. Interacts (when phosphorylated) with SLC9A3; the interaction is required for SLC9A3 apical location and activity. Interacts (when phosphorylated) with FIP1L1; the interaction is direct and associates AHCYL1 with the CPSF complex and RNA. Interacts with PAPOLA. Interacts with ZCCHC4. Interacts with AHCY. The cofactor is NAD(+). Phosphorylated at Ser/Thr residues between Ser-68 and Thr-72 in the PEST region: required for interaction with dATP-bound RRM1 and ITPR1. Phosphorylation at Ser-68 by PRKD1 and CAMK4 is required for further phosphorylations by CSNK1A1. Phosphorylation is induced by oxidative stress. Probably phosphorylated by CAMK2A; phosphorylation at Ser-68 may be required for interaction with SLC9A3. Dephosphorylated in response to apoptotic stress conditions which causes translocation of both AHCYL1 and BCL2L10 from mitochondria-associated endoplasmic reticulum membranes and promotes apoptosis. As to expression, expressed in dendritic cells.

It localises to the endoplasmic reticulum. The protein resides in the cytoplasm. The protein localises to the cytosol. It is found in the apical cell membrane. Its subcellular location is the microsome. Functionally, multifaceted cellular regulator which coordinates several essential cellular functions including regulation of epithelial HCO3(-) and fluid secretion, mRNA processing and DNA replication. Regulates ITPR1 sensitivity to inositol 1,4,5-trisphosphate, competing for the common binding site and acting as endogenous 'pseudoligand' whose inhibitory activity can be modulated by its phosphorylation status. Promotes the formation of contact points between the endoplasmic reticulum (ER) and mitochondria, facilitating transfer of Ca(2+) from the ER to mitochondria. Under normal cellular conditions, functions cooperatively with BCL2L10 to limit ITPR1-mediated Ca(2+) release but, under apoptotic stress conditions, dephosphorylated which promotes dissociation of both AHCYL1 and BCL2L10 from mitochondria-associated endoplasmic reticulum membranes, inhibits BCL2L10 interaction with ITPR1 and leads to increased Ca(2+) transfer to mitochondria which promotes apoptosis. In the pancreatic and salivary ducts, at resting state, attenuates inositol 1,4,5-trisphosphate-induced calcium release by interacting with ITPR1. When extracellular stimuli induce ITPR1 phosphorylation or inositol 1,4,5-trisphosphate production, dissociates from ITPR1 to interact with CFTR and SLC26A6, mediating their synergistic activation by calcium and cAMP that stimulates the epithelial secretion of electrolytes and fluid. Also activates basolateral SLC4A4 isoform 1 to coordinate fluid and HCO3(-) secretion. Inhibits the effect of STK39 on SLC4A4 and CFTR by recruiting PP1 phosphatase which activates SLC4A4, SLC26A6 and CFTR through dephosphorylation. Mediates the induction of SLC9A3 surface expression produced by Angiotensin-2. Depending on the cell type, activates SLC9A3 in response to calcium or reverses SLC9A3R2-dependent calcium inhibition. May modulate the polyadenylation state of specific mRNAs, both by controlling the subcellular location of FIP1L1 and by inhibiting PAPOLA activity, in response to a stimulus that alters its phosphorylation state. Acts as a (dATP)-dependent inhibitor of ribonucleotide reductase large subunit RRM1, controlling the endogenous dNTP pool and ensuring normal cell cycle progression. In vitro does not exhibit any S-adenosyl-L-homocysteine hydrolase activity. The chain is S-adenosylhomocysteine hydrolase-like protein 1 from Homo sapiens (Human).